The primary structure comprises 710 residues: MSKQTFTTTFAGKPLVVEVGQVAKQANGATVVRYGESTVLTAAVMSKKMATGDFFPLQVNYEEKMYAAGKFPGGFMKREGRPSTDATLTARLIDRPIRPMFAEGFRNEVQVINTVLSYDENASAPMAAMFGSSLALSISDIPFNGPIAGVQVGYIDGEFIINPDKEQMEASLLELTVAGSKEAINMVESGAKELSEDIMLEALLKGHQAIQELIAFQEQIVAVVGKEKAEVELLQVDADLQADIVAKYNAQLQKAVQVEEKKAREAATEAVKEMVKAEYEERYAEDENLATIMRDVAEILEQMEHAEVRRLITEDKIRPDGRKIDEIRPLDAVVDFLPKVHGSGLFTRGQTQALSILTLAPMGETQIIDGLAPEYKKRFLHHYNFPQYSVGETGRYGAAGRREIGHGALGERALEQVLPSLEEFPYAIRLVAEVLESNGSSSQASICAGTLALMAGGVPIKAPVAGIAMGLISDGTNYTVLTDIQGLEDHFGDMDFKVAGTREGITALQMDIKIAGITPQILEEALAQAKKARFEILDVIEATIAEPRPELAPTAPKIDTIKIDVDKIKVVIGKGGETIDKIIAETGVKIDIDDEGNVSIYSSDQAAINRTKEIIAGLVREAKVGEVYHAKVVRIEKFGAFVNLFDKTDALVHISEIAWTRTTNVSDVLEVGEDVDVKVIKIDEKGRVDASMKALIPRPPKPEKKEEKHD.

Aspartate 489 and aspartate 495 together coordinate Mg(2+). In terms of domain architecture, KH spans 556 to 615 (PKIDTIKIDVDKIKVVIGKGGETIDKIIAETGVKIDIDDEGNVSIYSSDQAAINRTKEII). In terms of domain architecture, S1 motif spans 625–693 (GEVYHAKVVR…EKGRVDASMK (69 aa)). Positions 691-710 (SMKALIPRPPKPEKKEEKHD) are disordered. Residues 700-710 (PKPEKKEEKHD) show a composition bias toward basic and acidic residues.

Belongs to the polyribonucleotide nucleotidyltransferase family. The cofactor is Mg(2+).

Its subcellular location is the cytoplasm. The enzyme catalyses RNA(n+1) + phosphate = RNA(n) + a ribonucleoside 5'-diphosphate. In terms of biological role, involved in mRNA degradation. Catalyzes the phosphorolysis of single-stranded polyribonucleotides processively in the 3'- to 5'-direction. The polypeptide is Polyribonucleotide nucleotidyltransferase (Streptococcus pyogenes serotype M2 (strain MGAS10270)).